The primary structure comprises 291 residues: 4-hydroxy-tetrahydrodipicolinate synthase (291 aa).

Threonine 44 is a binding site for pyruvate. Tyrosine 132 acts as the Proton donor/acceptor in catalysis. Lysine 160 (schiff-base intermediate with substrate) is an active-site residue. Position 202 (isoleucine 202) interacts with pyruvate.

This sequence belongs to the DapA family. As to quaternary structure, homotetramer; dimer of dimers.

Its subcellular location is the cytoplasm. It carries out the reaction L-aspartate 4-semialdehyde + pyruvate = (2S,4S)-4-hydroxy-2,3,4,5-tetrahydrodipicolinate + H2O + H(+). Its pathway is amino-acid biosynthesis; L-lysine biosynthesis via DAP pathway; (S)-tetrahydrodipicolinate from L-aspartate: step 3/4. In terms of biological role, catalyzes the condensation of (S)-aspartate-beta-semialdehyde [(S)-ASA] and pyruvate to 4-hydroxy-tetrahydrodipicolinate (HTPA). This Syntrophobacter fumaroxidans (strain DSM 10017 / MPOB) protein is 4-hydroxy-tetrahydrodipicolinate synthase.